Consider the following 128-residue polypeptide: Centrosomal protein 15 (128 aa).

It is found in the cell projection. The protein localises to the cilium. May play a role in ciliary assembly. In Homo sapiens (Human), this protein is Centrosomal protein 15.